The following is a 138-amino-acid chain: uncharacterized protein (138 aa).

Residues 11–33 traverse the membrane as a helical segment; sequence ILLGLTLSLTFLYPLIITLIILY.

The protein resides in the membrane. This is an uncharacterized protein from Aquifex aeolicus (strain VF5).